The following is a 204-amino-acid chain: Recombination protein RecR (204 aa).

The C4-type zinc-finger motif lies at 58–75; it reads CSVCQNVTDREEDPCSIC. The region spanning 83–181 is the Toprim domain; the sequence is TVICVVESPV…EVTKIARGIP (99 aa).

The protein belongs to the RecR family.

Its function is as follows. May play a role in DNA repair. It seems to be involved in an RecBC-independent recombinational process of DNA repair. It may act with RecF and RecO. This chain is Recombination protein RecR, found in Chlorobium luteolum (strain DSM 273 / BCRC 81028 / 2530) (Pelodictyon luteolum).